The sequence spans 707 residues: E3 ubiquitin-protein ligase MARCHF7 (707 aa).

Methionine 1 is subject to N-acetylmethionine. Disordered regions lie at residues 1–126 (MESK…QVPR), 157–279 (LMDY…RRTT), 294–343 (FFSR…RASE), 361–425 (SHNH…HIFR), and 444–473 (AANRPQASAASSSATTGGSTSDSAQGGRNT). Residues 17–33 (SSSLSARMMSGSRGSSL) show a composition bias toward low complexity. Basic and acidic residues predominate over residues 37–48 (YHSRDSSFRLDS). Positions 52–65 (STSASASASPFQSA) are enriched in low complexity. Polar residues-rich tracts occupy residues 66 to 83 (WYSESEITQGARSRSQNQ), 95 to 126 (SCTNCTTSAGRNVGNGLNTLSDSSWRHSQVPR), 189 to 212 (NSMSTLQLNTSSTNHQLPSEHQTI), and 254 to 270 (ISNSERVVSSQRPFQES). The span at 294-303 (FFSRRSSQDS) shows a compositional bias: low complexity. Polar residues-rich tracts occupy residues 304–336 (LNTRSLSSENSYVSPRILTASQSRSNVPSTSEV), 373–392 (FNQESESRNTGPWLSSSLRN), and 412–421 (IPTSDTSSRS). Phosphoserine is present on residues serine 317 and serine 389. Positions 444 to 470 (AANRPQASAASSSATTGGSTSDSAQGG) are enriched in low complexity. An RING-CH-type zinc finger spans residues 544–614 (SEEEEGDLCR…ELCKEKLELN (71 aa)). Residues cysteine 552, cysteine 555, cysteine 570, cysteine 572, histidine 580, cysteine 583, cysteine 604, and cysteine 607 each contribute to the Zn(2+) site. Threonine 686 bears the Phosphothreonine mark. Serine 687 and serine 691 each carry phosphoserine.

The protein resides in the cytoplasm. The catalysed reaction is S-ubiquitinyl-[E2 ubiquitin-conjugating enzyme]-L-cysteine + [acceptor protein]-L-lysine = [E2 ubiquitin-conjugating enzyme]-L-cysteine + N(6)-ubiquitinyl-[acceptor protein]-L-lysine.. The protein operates within protein modification; protein ubiquitination. E3 ubiquitin-protein ligase which may specifically enhance the E2 activity of HIP2. E3 ubiquitin ligases accept ubiquitin from an E2 ubiquitin-conjugating enzyme in the form of a thioester and then directly transfer the ubiquitin to targeted substrates. May be involved in T-cell proliferation by regulating LIF secretion. May play a role in lysosome homeostasis. Promotes 'Lys-6', 'Lys-11' and 'Lys-63'-linked mixed polyubiquitination on ATG14 leading to the inhibition of autophagy by impairing the interaction between ATG14 and STX7. Participates in the dopamine-mediated negative regulation of the NLRP3 inflammasome by promoting its uibiquitination and subsequent degradation. This chain is E3 ubiquitin-protein ligase MARCHF7 (MARCHF7), found in Pongo abelii (Sumatran orangutan).